A 356-amino-acid polypeptide reads, in one-letter code: Tetraacyldisaccharide 4'-kinase (356 aa).

51-58 (GWGGSGKT) is an ATP binding site.

This sequence belongs to the LpxK family.

It carries out the reaction a lipid A disaccharide + ATP = a lipid IVA + ADP + H(+). The protein operates within glycolipid biosynthesis; lipid IV(A) biosynthesis; lipid IV(A) from (3R)-3-hydroxytetradecanoyl-[acyl-carrier-protein] and UDP-N-acetyl-alpha-D-glucosamine: step 6/6. Its function is as follows. Transfers the gamma-phosphate of ATP to the 4'-position of a tetraacyldisaccharide 1-phosphate intermediate (termed DS-1-P) to form tetraacyldisaccharide 1,4'-bis-phosphate (lipid IVA). This Oleidesulfovibrio alaskensis (strain ATCC BAA-1058 / DSM 17464 / G20) (Desulfovibrio alaskensis) protein is Tetraacyldisaccharide 4'-kinase.